The chain runs to 660 residues: Leucine-rich repeat transmembrane protein FLRT2 (660 aa).

An N-terminal signal peptide occupies residues 1–35 (MGLQTTKWPGRGAFILKFWLIISLGLYLQVSKLLA). 2 disulfides stabilise this stretch: C36/C42 and C40/C49. The LRRNT domain occupies 36–63 (CPSVCRCDRNFVYCNERSLTSVPLGIPE). Over 36 to 540 (CPSVCRCDRN…QTTSHSMGSP (505 aa)) the chain is Extracellular. LRR repeat units lie at residues 62–87 (PEGV…LHNV), 88–108 (QSVH…MNLP), 109–131 (KNVR…ALAQ), 132–157 (LLKL…AFRE), 159–181 (ISLK…LPVD), 183–202 (QELR…AFQN), 203–228 (LTSL…TFSH), 229–251 (LTKL…DLPG), 252–274 (THLI…AFAN), and 275–298 (LRKL…VFDH). An N-linked (GlcNAc...) asparagine glycan is attached at N202. Positions 310 to 362 (NPWFCDCSIKWVTEWLKYIPSSLNVRGFMCQGPEQVRGMAVRELNMNLLSCPT) constitute an LRRCT domain. Intrachain disulfides connect C314/C339 and C316/C360. Low complexity predominate over residues 371–396 (TPAPSTVSPTTQSPTLSVPSPSRGSV). The disordered stretch occupies residues 371-413 (TPAPSTVSPTTQSPTLSVPSPSRGSVPPAPTPSKLPTIPDWDG). In terms of domain architecture, Fibronectin type-III spans 419-517 (PPISERIQLS…ICSEATTHAS (99 aa)). The chain crosses the membrane as a helical span at residues 541 to 561 (FLLAGLIGGAVIFVLVVLLSV). The Cytoplasmic portion of the chain corresponds to 562-660 (FCWHMHKKGR…SVPDLEHCHT (99 aa)).

In terms of assembly, self-associates (via leucine-rich repeats), giving rise to homooligomers. Interacts with FGFR1. Interacts with FGFR2. Interacts (via extracellular domain) with ADGRL1/LPHN1. Interacts (via extracellular domain) with ADGRL3 (via olfactomedin-like domain). Interacts (via extracellular domain) with UNC5D (via the first Ig-like domain). Can also interact (via extracellular domain) with UNC5B, but with much lower affinity. Interacts (via extracellular domain) with FN1. In terms of processing, N-glycosylated. Proteolytic cleavage in the juxtamembrane region gives rise to a soluble ectodomain. Cleavage is probably effected by a metalloprotease. In terms of tissue distribution, detected in adult brain (at protein level).

It is found in the cell membrane. The protein localises to the endoplasmic reticulum membrane. It localises to the cell junction. The protein resides in the focal adhesion. Its subcellular location is the secreted. It is found in the extracellular space. The protein localises to the extracellular matrix. It localises to the synapse. The protein resides in the synaptosome. Its subcellular location is the microsome membrane. Functions in cell-cell adhesion, cell migration and axon guidance. Mediates cell-cell adhesion via its interactions with ADGRL3 and probably also other latrophilins that are expressed at the surface of adjacent cells. May play a role in the migration of cortical neurons during brain development via its interaction with UNC5D. Mediates axon growth cone collapse and plays a repulsive role in neuron guidance via its interaction with UNC5D, and possibly also other UNC-5 family members. Plays a role in fibroblast growth factor-mediated signaling cascades. Required for normal organization of the cardiac basement membrane during embryogenesis, and for normal embryonic epicardium and heart morphogenesis. The sequence is that of Leucine-rich repeat transmembrane protein FLRT2 from Mus musculus (Mouse).